A 139-amino-acid chain; its full sequence is uncharacterized protein (139 aa).

3 consecutive transmembrane segments (helical) span residues 19 to 39 (CIIF…FILG), 64 to 84 (IFNV…FNLF), and 89 to 109 (AITI…WILG).

Its subcellular location is the cell membrane. This is an uncharacterized protein from Methanocaldococcus jannaschii (strain ATCC 43067 / DSM 2661 / JAL-1 / JCM 10045 / NBRC 100440) (Methanococcus jannaschii).